Consider the following 151-residue polypeptide: Nucleoside diphosphate kinase (151 aa).

Residues Lys11, Phe59, Arg87, Arg104, and Asn114 each contribute to the ATP site. Residue His117 is the Pros-phosphohistidine intermediate of the active site.

The protein belongs to the NDK family. In terms of assembly, homotrimer. Mg(2+) is required as a cofactor.

The catalysed reaction is a 2'-deoxyribonucleoside 5'-diphosphate + ATP = a 2'-deoxyribonucleoside 5'-triphosphate + ADP. It carries out the reaction a ribonucleoside 5'-diphosphate + ATP = a ribonucleoside 5'-triphosphate + ADP. In terms of biological role, major role in the synthesis of nucleoside triphosphates other than ATP. The ATP gamma phosphate is transferred to the NDP beta phosphate via a ping-pong mechanism, using a phosphorylated active-site intermediate. In Schizosaccharomyces pombe (strain 972 / ATCC 24843) (Fission yeast), this protein is Nucleoside diphosphate kinase (ndk1).